The chain runs to 700 residues: Glycine--tRNA ligase beta subunit (700 aa).

This sequence belongs to the class-II aminoacyl-tRNA synthetase family. In terms of assembly, tetramer of two alpha and two beta subunits.

Its subcellular location is the cytoplasm. It catalyses the reaction tRNA(Gly) + glycine + ATP = glycyl-tRNA(Gly) + AMP + diphosphate. This is Glycine--tRNA ligase beta subunit from Magnetococcus marinus (strain ATCC BAA-1437 / JCM 17883 / MC-1).